The sequence spans 243 residues: NAD-dependent protein deacetylase (243 aa).

The Deacetylase sirtuin-type domain occupies 1–243 (MRNDLETLKH…VSVVKSLMTE (243 aa)). 7 residues coordinate NAD(+): Ala-24, Phe-35, Arg-36, Gln-105, Ile-107, Asp-108, and His-123. Residue Phe-35 coordinates nicotinamide. Residues Ile-107 and Asp-108 each contribute to the nicotinamide site. The active-site Proton acceptor is His-123. Zn(2+) is bound by residues Cys-131, Cys-134, Cys-151, and Cys-154. Ser-192, Ser-193, Asn-215, and Asp-232 together coordinate NAD(+).

It belongs to the sirtuin family. Class U subfamily. Requires Zn(2+) as cofactor.

The protein resides in the cytoplasm. It catalyses the reaction N(6)-acetyl-L-lysyl-[protein] + NAD(+) + H2O = 2''-O-acetyl-ADP-D-ribose + nicotinamide + L-lysyl-[protein]. Functionally, NAD-dependent protein deacetylase which modulates the activities of several enzymes which are inactive in their acetylated form. This is NAD-dependent protein deacetylase from Staphylococcus aureus (strain MSSA476).